The chain runs to 513 residues: MVVSPSTMAAVRASGAVPNAEFLLAADGIRKEFPGVVALDDVQFHLKRGTVHALMGENGAGKSTLMKILAGIYQPDNGEIRLKGAPIRLDSPLDALENGIAMIHQELNLMAYMTVAENIWIRREPKNRLGFIDHGEMYRRTETLLERLGIDLDPETRVGELSVASRQMVEIAKAVSYNSDVLIMDEPTSALTEREVEHLFRIIRDLRERGIGIVYITHKMNELFEIADEFSVFRDGKYIGTHASTDVTRDDIIRMMVGREITQMFPKEEVPIGDVVLSVKNLNLDGVFHDVSFDVRAGEILGVAGLVGSGRSNVAETVFGVTPASSGTISIDGKPVSIDSPTTAISHRMAFLTEDRKDTGCLLILNILENMQIAVLQDKYVANGFVQENALSEACEEMCRKLRVKTPHLYERIENLSGGNQQKVLIGRWMLTKPRILILDEPTRGIDVGAKAEIHKLVCEMARQGVAVIMISSEMPEVLGMSDRVMVMHEGRVTGFLARSEATQVKVMDLASR.

ABC transporter domains follow at residues 24–260 (LAAD…VGRE) and 270–510 (VPIG…VMDL). 56-63 (GENGAGKS) provides a ligand contact to ATP.

The protein belongs to the ABC transporter superfamily. Carbohydrate importer 2 (CUT2) (TC 3.A.1.2) family.

The protein localises to the cell inner membrane. The catalysed reaction is D-ribose(out) + ATP + H2O = D-ribose(in) + ADP + phosphate + H(+). It catalyses the reaction D-galactose(out) + ATP + H2O = D-galactose(in) + ADP + phosphate + H(+). Its function is as follows. Part of an ABC transporter complex involved in carbohydrate import. Could be involved in ribose, galactose and/or methyl galactoside import. Responsible for energy coupling to the transport system. The chain is Putative ribose/galactose/methyl galactoside import ATP-binding protein 2 from Agrobacterium fabrum (strain C58 / ATCC 33970) (Agrobacterium tumefaciens (strain C58)).